A 126-amino-acid polypeptide reads, in one-letter code: Aspartate 1-decarboxylase (126 aa).

Catalysis depends on S25, which acts as the Schiff-base intermediate with substrate; via pyruvic acid. S25 carries the pyruvic acid (Ser) modification. T57 is a binding site for substrate. Y58 acts as the Proton donor in catalysis. 73 to 75 (GAA) is a binding site for substrate.

Belongs to the PanD family. As to quaternary structure, heterooctamer of four alpha and four beta subunits. Pyruvate is required as a cofactor. In terms of processing, is synthesized initially as an inactive proenzyme, which is activated by self-cleavage at a specific serine bond to produce a beta-subunit with a hydroxyl group at its C-terminus and an alpha-subunit with a pyruvoyl group at its N-terminus.

It is found in the cytoplasm. The enzyme catalyses L-aspartate + H(+) = beta-alanine + CO2. Its pathway is cofactor biosynthesis; (R)-pantothenate biosynthesis; beta-alanine from L-aspartate: step 1/1. Its function is as follows. Catalyzes the pyruvoyl-dependent decarboxylation of aspartate to produce beta-alanine. In Psychrobacter arcticus (strain DSM 17307 / VKM B-2377 / 273-4), this protein is Aspartate 1-decarboxylase.